The chain runs to 531 residues: Jacalin-related lectin 16 (531 aa).

4 Jacalin-type lectin domains span residues 1–87 (MDRS…YFTW), 90–232 (PTKM…YFTT), 235–378 (LISL…YFRP), and 385–528 (TEKV…NVLP).

The protein belongs to the jacalin lectin family.

The protein is Jacalin-related lectin 16 (JAL16) of Arabidopsis thaliana (Mouse-ear cress).